Reading from the N-terminus, the 386-residue chain is O-methyltransferase aunE (386 aa).

An S-adenosyl-L-methionine-binding site is contributed by Trp-200. The active-site Proton acceptor is the His-299.

It belongs to the class I-like SAM-binding methyltransferase superfamily. Cation-independent O-methyltransferase family.

The protein operates within secondary metabolite biosynthesis. Functionally, O-methyltransferase; part of the gene cluster that mediates the biosynthesis of aurasperone B, a dimeric gamma-naphthopyrone. The first step in the biosynthesis of aurasperone B is the production of gamma-naphthopyrone precursor YWA1 by the non-reducing polyketide synthase albA, via condensation of one acetyl-CoA starter unit with 6 malonyl-CoA units. YWA1 is then methylated by aunE at position C-6 to yield foncesin which is further methylated at position C-8 by aunD to produce fonsecin B. A key enzyme in the biosynthetic pathway is the cytochrome P450 monooxygenase aunB which catalyzes the oxidative dimerization of fonsecin B to aurasperone B. AunB also catalyzes the oxidative dimerization of rubrofusarin B into aurasperone A. The protein is O-methyltransferase aunE of Aspergillus niger (strain ATCC MYA-4892 / CBS 513.88 / FGSC A1513).